A 783-amino-acid polypeptide reads, in one-letter code: Cyclic di-GMP phosphodiesterase NbdA (783 aa).

Residues 81-274 (YSPSLVALAF…FTGMAALVLS (194 aa)) enclose the MHYT domain. 7 helical membrane passes run 84 to 104 (SLVA…LDMV), 120 to 140 (IGAF…MLAF), 150 to 170 (LPIT…TMYM), 176 to 196 (FGLL…AAMH), 215 to 235 (LFAL…AAVP), 255 to 275 (LLAG…VLSV), and 292 to 312 (LGWL…WAAW). Residues 313–783 (SEKQRERRLS…APPLRSLNQA (471 aa)) are Cytoplasmic-facing. The GGDEF domain occupies 375–507 (KGLAVMFLDL…GRNNAQFFSR (133 aa)). Positions 516 to 770 (ELQMEEELRQ…ALEEFLRAYR (255 aa)) constitute an EAL domain. Positions 537, 551, 555, 610, and 615 each coordinate 3',3'-c-di-GMP. Glutamate 551 contributes to the Mg(2+) binding site. A Mg(2+)-binding site is contributed by asparagine 610. Mg(2+) is bound by residues glutamate 642, aspartate 672, and aspartate 673. Aspartate 672 is a binding site for 3',3'-c-di-GMP. Arginine 696 is a 3',3'-c-di-GMP binding site. Glutamate 729 provides a ligand contact to Mg(2+). Positions 732 and 751 each coordinate 3',3'-c-di-GMP.

Mg(2+) is required as a cofactor.

Its subcellular location is the cell inner membrane. The enzyme catalyses 3',3'-c-di-GMP + H2O = 5'-phosphoguanylyl(3'-&gt;5')guanosine + H(+). Its activity is regulated as follows. PDE activity is stimulated by GTP. It could also be stimulated by NO. Functionally, displays c-di-GMP-specific phosphodiesterase (PDE) activity. Seems to play a specific role in nitric oxide (NO)-induced biofilm dispersion. Enhanced NbdA synthesis in the presence of NO increases PDE activity, leading to reduced cellular c-di-GMP levels and biofilm dispersion. Does not show diguanylate cyclase (DGC) activity. In Pseudomonas aeruginosa (strain ATCC 15692 / DSM 22644 / CIP 104116 / JCM 14847 / LMG 12228 / 1C / PRS 101 / PAO1), this protein is Cyclic di-GMP phosphodiesterase NbdA.